Here is a 71-residue protein sequence, read N- to C-terminus: Small ribosomal subunit protein bS21 (71 aa).

Residues 50–59 (AAAVKRHAKK) are compositionally biased toward basic residues. The interval 50 to 71 (AAAVKRHAKKVQREQRRAVRLY) is disordered. A compositionally biased stretch (basic and acidic residues) spans 60-71 (VQREQRRAVRLY).

Belongs to the bacterial ribosomal protein bS21 family.

The protein is Small ribosomal subunit protein bS21 of Pseudomonas entomophila (strain L48).